We begin with the raw amino-acid sequence, 119 residues long: Large ribosomal subunit protein uL22 (119 aa).

It belongs to the universal ribosomal protein uL22 family. In terms of assembly, part of the 50S ribosomal subunit.

Functionally, this protein binds specifically to 23S rRNA; its binding is stimulated by other ribosomal proteins, e.g. L4, L17, and L20. It is important during the early stages of 50S assembly. It makes multiple contacts with different domains of the 23S rRNA in the assembled 50S subunit and ribosome. In terms of biological role, the globular domain of the protein is located near the polypeptide exit tunnel on the outside of the subunit, while an extended beta-hairpin is found that lines the wall of the exit tunnel in the center of the 70S ribosome. This chain is Large ribosomal subunit protein uL22, found in Rhodopirellula baltica (strain DSM 10527 / NCIMB 13988 / SH1).